The primary structure comprises 115 residues: UPF0738 protein SSP1780 (115 aa).

Belongs to the UPF0738 family.

In Staphylococcus saprophyticus subsp. saprophyticus (strain ATCC 15305 / DSM 20229 / NCIMB 8711 / NCTC 7292 / S-41), this protein is UPF0738 protein SSP1780.